We begin with the raw amino-acid sequence, 223 residues long: Putative oxidoreductase MT1904 (223 aa).

4–28 contributes to the NADP(+) binding site; that stretch reads LVTGGDTDLGRTMAEGFRNDGHKVT. Serine 128 is a substrate binding site.

The protein belongs to the short-chain dehydrogenases/reductases (SDR) family.

This Mycobacterium tuberculosis (strain CDC 1551 / Oshkosh) protein is Putative oxidoreductase MT1904.